The primary structure comprises 135 residues: UPF0251 protein Hore_18270 (135 aa).

This sequence belongs to the UPF0251 family.

The protein is UPF0251 protein Hore_18270 of Halothermothrix orenii (strain H 168 / OCM 544 / DSM 9562).